Consider the following 416-residue polypeptide: D-amino acid dehydrogenase (416 aa).

3 to 17 (VVILGAGVIGVTSAW) is a binding site for FAD.

It belongs to the DadA oxidoreductase family. Requires FAD as cofactor.

It catalyses the reaction a D-alpha-amino acid + A + H2O = a 2-oxocarboxylate + AH2 + NH4(+). It functions in the pathway amino-acid degradation; D-alanine degradation; NH(3) and pyruvate from D-alanine: step 1/1. Its function is as follows. Oxidative deamination of D-amino acids. The sequence is that of D-amino acid dehydrogenase from Rhizorhabdus wittichii (strain DSM 6014 / CCUG 31198 / JCM 15750 / NBRC 105917 / EY 4224 / RW1) (Sphingomonas wittichii).